The sequence spans 505 residues: Nicotinamide phosphoribosyltransferase (505 aa).

Arg196 serves as a coordination point for diphosphate. A beta-nicotinamide D-ribonucleotide-binding site is contributed by Asp219. Residues His246 and Arg314 each contribute to the diphosphate site. Residues 314–316 (RPD), 369–370 (GD), and Arg408 each bind beta-nicotinamide D-ribonucleotide.

The protein belongs to the NAPRTase family.

The enzyme catalyses beta-nicotinamide D-ribonucleotide + diphosphate = 5-phospho-alpha-D-ribose 1-diphosphate + nicotinamide + H(+). It functions in the pathway cofactor biosynthesis; NAD(+) biosynthesis; nicotinamide D-ribonucleotide from 5-phospho-alpha-D-ribose 1-diphosphate and nicotinamide: step 1/1. Its activity is regulated as follows. 10-fold more active in the presence of saturating ATP. In terms of biological role, catalyzes the condensation of nicotinamide with 5-phosphoribosyl-1-pyrophosphate to yield nicotinamide mononucleotide, an intermediate in the biosynthesis of NAD. Functions in the nondeamidating salvage pathway for production of NAD from nicotinamide. Displays a strict preference for nicotinamide over nicotinate substrate. The protein is Nicotinamide phosphoribosyltransferase of Acinetobacter baylyi (strain ATCC 33305 / BD413 / ADP1).